The chain runs to 321 residues: MENQASLNSIQKTVWDGKLPLQITLASSESRTFDQTDPYLISCPRISYLPSLLPRLRSFFASSLIEPKSQPHEGWFSFEGVPLKWHLPIGLLYDLYAGADPASKGSRPDESEQIISSVGDTLPWRLTLHFSDWPDEELVRLDADGMVMHDAFINSVKEADFLRNGTAKGIMSLSKEDSSGLWEAVQDVDLPSFQRISNILLPAPNQPFRNVPIRFFLPLPPDSGSPSLKVVQSPLPPSIPASTANATQSTVLRGKPASQLQTIGSALHSLLPNLFPSRRTPVLAKPVLHGAAVPMSAPVEEVARSAAYGDGWVYIVVRMMG.

Residue Lys157 forms a Glycyl lysine isopeptide (Lys-Gly) (interchain with G-Cter in atg12) linkage.

The protein belongs to the ATG5 family. Conjugated with atg12. Conjugated to atg12; which is essential for autophagy.

It localises to the preautophagosomal structure membrane. Its function is as follows. Involved in cytoplasm to vacuole transport (Cvt) and autophagic vesicle formation. Autophagy is essential for maintenance of amino acid levels and protein synthesis under nitrogen starvation. Required for selective autophagic degradation of the nucleus (nucleophagy). Also required for mitophagy, which eliminates defective or superfluous mitochondria in order to fulfill cellular energy requirements and prevent excess ROS production. Conjugation with atg12, through a ubiquitin-like conjugating system involving atg7 as an E1-like activating enzyme and atg10 as an E2-like conjugating enzyme, is essential for its function. The atg12-atg5 conjugate acts as an E3-like enzyme which is required for lipidation of atg8 and atg8 association to the vesicle membranes. The polypeptide is Autophagy protein 5 (atg5) (Aspergillus clavatus (strain ATCC 1007 / CBS 513.65 / DSM 816 / NCTC 3887 / NRRL 1 / QM 1276 / 107)).